Reading from the N-terminus, the 156-residue chain is Xanthocillin biosynthesis cluster protein D (156 aa).

N-linked (GlcNAc...) asparagine glycosylation is found at N107 and N120. Residues 131-153 (IHLNAIALVATVWYGFTLSSSLL) traverse the membrane as a helical segment.

It is found in the membrane. It participates in secondary metabolite biosynthesis. In terms of biological role, part of the gene cluster that mediates the biosynthesis of the isocyanide xanthocillin and its derivatives. The first step of the pathway consists in the conversion of tyrosine into a vinyl-isonitrile intermediate by the isocyanide synthase xanB. Subsequent oxidative dimerization of this intermediate to form xanthocillin may involve the cytochrome P450 monooxygenase xanG, whose expression is coregulated with that of XanB. Xanthocillin can be further modified by the isonitrile hydratase-like protein xanA which introduces N-formyl groups and the methyltransferase xanE which introduces methyl groups, leading to the production of several derivatives including fumiformamide. Finally, fumiformamide can be subject to both oxidative and reductive cyclization to yield melanocins E and F, respectively. In Aspergillus fumigatus (strain ATCC MYA-4609 / CBS 101355 / FGSC A1100 / Af293) (Neosartorya fumigata), this protein is Xanthocillin biosynthesis cluster protein D.